We begin with the raw amino-acid sequence, 668 residues long: UvrABC system protein B (668 aa).

A Helicase ATP-binding domain is found at 25–414; sequence RGLHAGARFQ…IVEQLIRPTG (390 aa). 38-45 contacts ATP; that stretch reads GVTGSGKT. Positions 91-114 match the Beta-hairpin motif; the sequence is YYDYYQPESYVPARDLYIEKDASI. A Helicase C-terminal domain is found at 431–594; sequence DICQRVKACS…TIKKSIEDIL (164 aa). Positions 627-662 constitute a UVR domain; that stretch reads KKMVQALRLHMKVCARELRFEEAALIRDKILQLQRQ.

Belongs to the UvrB family. In terms of assembly, forms a heterotetramer with UvrA during the search for lesions. Interacts with UvrC in an incision complex.

The protein resides in the cytoplasm. The UvrABC repair system catalyzes the recognition and processing of DNA lesions. A damage recognition complex composed of 2 UvrA and 2 UvrB subunits scans DNA for abnormalities. Upon binding of the UvrA(2)B(2) complex to a putative damaged site, the DNA wraps around one UvrB monomer. DNA wrap is dependent on ATP binding by UvrB and probably causes local melting of the DNA helix, facilitating insertion of UvrB beta-hairpin between the DNA strands. Then UvrB probes one DNA strand for the presence of a lesion. If a lesion is found the UvrA subunits dissociate and the UvrB-DNA preincision complex is formed. This complex is subsequently bound by UvrC and the second UvrB is released. If no lesion is found, the DNA wraps around the other UvrB subunit that will check the other stand for damage. The sequence is that of UvrABC system protein B from Treponema pallidum (strain Nichols).